We begin with the raw amino-acid sequence, 308 residues long: ADP-L-glycero-D-manno-heptose-6-epimerase (308 aa).

NADP(+) contacts are provided by residues 10–11 (MI), 31–32 (DN), Lys-38, Lys-53, 75–79 (EGACS), and Asn-92. Tyr-139 (proton acceptor) is an active-site residue. Residue Lys-143 coordinates NADP(+). Asn-168 contributes to the substrate binding site. Residues Val-169 and Lys-177 each contribute to the NADP(+) site. Lys-177 acts as the Proton acceptor in catalysis. Residues Ser-179, His-186, 200–203 (FAGS), Arg-208, and Tyr-271 contribute to the substrate site.

The protein belongs to the NAD(P)-dependent epimerase/dehydratase family. HldD subfamily. Homopentamer. The cofactor is NADP(+).

It carries out the reaction ADP-D-glycero-beta-D-manno-heptose = ADP-L-glycero-beta-D-manno-heptose. It functions in the pathway nucleotide-sugar biosynthesis; ADP-L-glycero-beta-D-manno-heptose biosynthesis; ADP-L-glycero-beta-D-manno-heptose from D-glycero-beta-D-manno-heptose 7-phosphate: step 4/4. Functionally, catalyzes the interconversion between ADP-D-glycero-beta-D-manno-heptose and ADP-L-glycero-beta-D-manno-heptose via an epimerization at carbon 6 of the heptose. This Mannheimia succiniciproducens (strain KCTC 0769BP / MBEL55E) protein is ADP-L-glycero-D-manno-heptose-6-epimerase.